A 207-amino-acid polypeptide reads, in one-letter code: Inhibitor of hydrogen peroxide resistance (207 aa).

A DNA-binding region (H-T-H motif) is located at residues 163 to 182; it reads MNYIHQRTRISRSVVAEVLA.

This sequence belongs to the IprA family.

Its function is as follows. Involved in oxidative stress resistance. The protein is Inhibitor of hydrogen peroxide resistance of Escherichia coli O157:H7.